The sequence spans 244 residues: uncharacterized protein (244 aa).

Transmembrane regions (helical) follow at residues 22–42, 63–83, 110–130, 140–160, 186–206, and 213–233; these read IMLQ…LLSF, FIFS…WGLT, VILL…EAFA, IMSL…NLTV, GVLF…IFQL, and AVFD…MLVV.

It localises to the cell membrane. This is an uncharacterized protein from Haemophilus influenzae (strain ATCC 51907 / DSM 11121 / KW20 / Rd).